We begin with the raw amino-acid sequence, 439 residues long: Phosphomethylpyrimidine synthase (439 aa).

Substrate-binding positions include asparagine 67, methionine 96, tyrosine 126, histidine 165, 187 to 189 (SRG), 228 to 231 (DSLR), and glutamate 267. Histidine 271 serves as a coordination point for Zn(2+). Position 294 (tyrosine 294) interacts with substrate. Histidine 335 is a Zn(2+) binding site. Residues cysteine 411, cysteine 414, and cysteine 418 each contribute to the [4Fe-4S] cluster site.

It belongs to the ThiC family. [4Fe-4S] cluster serves as cofactor.

It catalyses the reaction 5-amino-1-(5-phospho-beta-D-ribosyl)imidazole + S-adenosyl-L-methionine = 4-amino-2-methyl-5-(phosphooxymethyl)pyrimidine + CO + 5'-deoxyadenosine + formate + L-methionine + 3 H(+). Its pathway is cofactor biosynthesis; thiamine diphosphate biosynthesis. Its function is as follows. Catalyzes the synthesis of the hydroxymethylpyrimidine phosphate (HMP-P) moiety of thiamine from aminoimidazole ribotide (AIR) in a radical S-adenosyl-L-methionine (SAM)-dependent reaction. This chain is Phosphomethylpyrimidine synthase, found in Ignicoccus hospitalis (strain KIN4/I / DSM 18386 / JCM 14125).